The sequence spans 465 residues: Fumarate hydratase class II (465 aa).

Residues S99 to T101, R127, H130 to D133, S140 to N142, and T188 each bind substrate. The active-site Proton donor/acceptor is H189. S319 is a catalytic residue. Residues S320 and K325 to N327 contribute to the substrate site.

The protein belongs to the class-II fumarase/aspartase family. Fumarase subfamily. In terms of assembly, homotetramer.

The protein resides in the cytoplasm. The enzyme catalyses (S)-malate = fumarate + H2O. It participates in carbohydrate metabolism; tricarboxylic acid cycle; (S)-malate from fumarate: step 1/1. In terms of biological role, involved in the TCA cycle. Catalyzes the stereospecific interconversion of fumarate to L-malate. The protein is Fumarate hydratase class II of Parasynechococcus marenigrum (strain WH8102).